Reading from the N-terminus, the 301-residue chain is Phosducin-like protein (301 aa).

Thr2 bears the N-acetylthreonine mark. The tract at residues 15–53 (YYYSSSEEEDSDHEDKDRGRGALAGSSMPADADLAGEGI) is disordered. Ser20, Ser25, Ser226, Ser293, and Ser296 each carry phosphoserine. In terms of domain architecture, Phosducin spans 37-299 (LAGSSMPADA…TCHSEDSDLE (263 aa)). Residues 158–301 (FKQVFEIPSG…HSEDSDLEID (144 aa)) are thioredoxin fold.

The protein belongs to the phosducin family. Forms a complex with the beta and gamma subunits of the GTP-binding protein, transducin. Interacts with the CCT chaperonin complex.

The protein localises to the cell projection. It is found in the cilium. Functionally, functions as a co-chaperone for CCT in the assembly of heterotrimeric G protein complexes, facilitates the assembly of both Gbeta-Ggamma and RGS-Gbeta5 heterodimers. Also acts as a positive regulator of hedgehog signaling and regulates ciliary function. The chain is Phosducin-like protein (PDCL) from Bos taurus (Bovine).